A 214-amino-acid polypeptide reads, in one-letter code: Pyridoxine/pyridoxamine 5'-phosphate oxidase (214 aa).

Substrate contacts are provided by residues 8–11 (RKSY) and K67. FMN contacts are provided by residues 62–67 (RVVLLK), 77–78 (YT), K84, and Q106. Substrate-binding residues include Y124, R128, and S132. FMN-binding positions include 141–142 (QS) and W186. 192-194 (RLH) provides a ligand contact to substrate. R196 provides a ligand contact to FMN.

The protein belongs to the pyridoxamine 5'-phosphate oxidase family. As to quaternary structure, homodimer. The cofactor is FMN.

The enzyme catalyses pyridoxamine 5'-phosphate + O2 + H2O = pyridoxal 5'-phosphate + H2O2 + NH4(+). It carries out the reaction pyridoxine 5'-phosphate + O2 = pyridoxal 5'-phosphate + H2O2. The protein operates within cofactor metabolism; pyridoxal 5'-phosphate salvage; pyridoxal 5'-phosphate from pyridoxamine 5'-phosphate: step 1/1. It participates in cofactor metabolism; pyridoxal 5'-phosphate salvage; pyridoxal 5'-phosphate from pyridoxine 5'-phosphate: step 1/1. Its function is as follows. Catalyzes the oxidation of either pyridoxine 5'-phosphate (PNP) or pyridoxamine 5'-phosphate (PMP) into pyridoxal 5'-phosphate (PLP). The polypeptide is Pyridoxine/pyridoxamine 5'-phosphate oxidase (Flavobacterium johnsoniae (strain ATCC 17061 / DSM 2064 / JCM 8514 / BCRC 14874 / CCUG 350202 / NBRC 14942 / NCIMB 11054 / UW101) (Cytophaga johnsonae)).